The sequence spans 143 residues: Large ribosomal subunit protein uL11 (143 aa).

This sequence belongs to the universal ribosomal protein uL11 family. In terms of assembly, part of the ribosomal stalk of the 50S ribosomal subunit. Interacts with L10 and the large rRNA to form the base of the stalk. L10 forms an elongated spine to which L12 dimers bind in a sequential fashion forming a multimeric L10(L12)X complex. Post-translationally, one or more lysine residues are methylated.

Functionally, forms part of the ribosomal stalk which helps the ribosome interact with GTP-bound translation factors. The chain is Large ribosomal subunit protein uL11 from Borreliella afzelii (strain PKo) (Borrelia afzelii).